The primary structure comprises 108 residues: MMKGQLAGLMKQAQQMQENMKKMQEQLAQIEVEGQSGAGLVKVVMTCKNDVKRVTIDPSLLADDKDLLEDLVAAAFNDAVRKAEATTQEKMGSMTSGLPLPPGFKLPF.

Over residues 86-96 the composition is skewed to polar residues; sequence TTQEKMGSMTS. A disordered region spans residues 86–108; sequence TTQEKMGSMTSGLPLPPGFKLPF. Over residues 99-108 the composition is skewed to pro residues; sequence PLPPGFKLPF.

It belongs to the YbaB/EbfC family. In terms of assembly, homodimer.

The protein resides in the cytoplasm. Its subcellular location is the nucleoid. In terms of biological role, binds to DNA and alters its conformation. May be involved in regulation of gene expression, nucleoid organization and DNA protection. This is Nucleoid-associated protein Rmet_2128 from Cupriavidus metallidurans (strain ATCC 43123 / DSM 2839 / NBRC 102507 / CH34) (Ralstonia metallidurans).